The chain runs to 328 residues: Cytochrome c biogenesis protein CcsA (328 aa).

8 consecutive transmembrane segments (helical) span residues 13-33 (ISFS…LVNL), 46-66 (GIII…IYSG), 73-93 (LYES…VSYF), 101-121 (LNAI…SGLL), 146-166 (MILG…LLVI), 234-254 (IISL…VWAN), 263-283 (WDPK…YLHI), and 295-315 (AIVA…VNLL).

This sequence belongs to the CcmF/CycK/Ccl1/NrfE/CcsA family. May interact with Ccs1.

It localises to the plastid. The protein localises to the chloroplast thylakoid membrane. Its function is as follows. Required during biogenesis of c-type cytochromes (cytochrome c6 and cytochrome f) at the step of heme attachment. The chain is Cytochrome c biogenesis protein CcsA from Capsella bursa-pastoris (Shepherd's purse).